A 144-amino-acid polypeptide reads, in one-letter code: 3-hydroxyacyl-[acyl-carrier-protein] dehydratase FabZ (144 aa).

His-47 is an active-site residue.

This sequence belongs to the thioester dehydratase family. FabZ subfamily.

The protein resides in the cytoplasm. It carries out the reaction a (3R)-hydroxyacyl-[ACP] = a (2E)-enoyl-[ACP] + H2O. Functionally, involved in unsaturated fatty acids biosynthesis. Catalyzes the dehydration of short chain beta-hydroxyacyl-ACPs and long chain saturated and unsaturated beta-hydroxyacyl-ACPs. This Alcanivorax borkumensis (strain ATCC 700651 / DSM 11573 / NCIMB 13689 / SK2) protein is 3-hydroxyacyl-[acyl-carrier-protein] dehydratase FabZ.